Consider the following 89-residue polypeptide: Small ribosomal subunit protein uS15 (89 aa).

This sequence belongs to the universal ribosomal protein uS15 family. In terms of assembly, part of the 30S ribosomal subunit. Forms a bridge to the 50S subunit in the 70S ribosome, contacting the 23S rRNA.

Functionally, one of the primary rRNA binding proteins, it binds directly to 16S rRNA where it helps nucleate assembly of the platform of the 30S subunit by binding and bridging several RNA helices of the 16S rRNA. Forms an intersubunit bridge (bridge B4) with the 23S rRNA of the 50S subunit in the ribosome. In Agrobacterium fabrum (strain C58 / ATCC 33970) (Agrobacterium tumefaciens (strain C58)), this protein is Small ribosomal subunit protein uS15.